We begin with the raw amino-acid sequence, 443 residues long: D(2) dopamine receptor (443 aa).

The Extracellular portion of the chain corresponds to 1 to 37 (MDPLNLSWYDDDPESRNWSRPFNGSEGKVGKPHYNYY). Asn5, Asn17, and Asn23 each carry an N-linked (GlcNAc...) asparagine glycan. A helical transmembrane segment spans residues 38 to 60 (AMLLTLLIFVIVFGNVLVCMAVS). The Cytoplasmic segment spans residues 61–70 (REKALQTTTN). The chain crosses the membrane as a helical span at residues 71-93 (YLIVSLAVADLLVATLVMPWVVY). Residues 94–108 (LEVVGEWKFSRIHCD) are Extracellular-facing. The cysteines at positions 107 and 182 are disulfide-linked. A helical transmembrane segment spans residues 109–130 (IFVTLDVMMCTASILNLCAISI). Over 131 to 151 (DRYTAVAMPMLYNTRYSSKRR) the chain is Cytoplasmic. A helical transmembrane segment spans residues 152–172 (VTVMIAIVWVLSFTISCPLLF). Topologically, residues 173-188 (GLNNTDQNECIIANPA) are extracellular. Residues 189 to 213 (FVVYSSVVSFYVPFIVTLLVYIKIY) traverse the membrane as a helical segment. The tract at residues 211–373 (KIYIVLRRRR…SQQKEKKATQ (163 aa)) is interaction with PPP1R9B. Topologically, residues 214–373 (IVLRRRRKRV…SQQKEKKATQ (160 aa)) are cytoplasmic. The tract at residues 282–331 (EMLSSTSPPERTRYSPIPPSHHQLTLPDPSHHGLHSTANSPVKPEKNGHA) is disordered. A helical transmembrane segment spans residues 374 to 395 (MLAIVLGVFIICWLPFFITHIL). Topologically, residues 396 to 409 (NIHCDCNIPPVLYS) are extracellular. The cysteines at positions 399 and 401 are disulfide-linked. Residues 410-431 (AFTWLGYVNSAVNPIIYTTFNV) form a helical membrane-spanning segment. Topologically, residues 432-443 (EFRKAFMKILHC) are cytoplasmic. Cys443 carries the S-palmitoyl cysteine lipid modification.

The protein belongs to the G-protein coupled receptor 1 family. In terms of assembly, forms homo- and heterooligomers with DRD4. The interaction with DRD4 may modulate agonist-induced downstream signaling. Interacts with CADPS and CADPS2. Interacts with GPRASP1, PPP1R9B and CLIC6. Interacts with ARRB2. Interacts with HTR2A. Interacts with DRD1. Interacts with KCNA2. In terms of processing, palmitoylated. Palmitoylation which is required for proper localization to the plasma membrane and stability of the receptor could be carried on by ZDHHC4, ZDHHC3 and ZDHHC8.

The protein localises to the cell membrane. It localises to the golgi apparatus membrane. Functionally, dopamine receptor whose activity is mediated by G proteins which inhibit adenylyl cyclase. Positively regulates postnatal regression of retinal hyaloid vessels via suppression of VEGFR2/KDR activity, downstream of OPN5. The protein is D(2) dopamine receptor (DRD2) of Mustela putorius furo (European domestic ferret).